The chain runs to 64 residues: Conotoxin Pn-B01122 (64 aa).

Positions 1–22 (MRCLPVFVILLLLIASAPSVDA) are cleaved as a signal peptide. Positions 23–48 (RPKTKDDIPLVSFQDNAKRALQILSN) are excised as a propeptide.

This sequence belongs to the conotoxin T superfamily. In terms of processing, contains 2 disulfide bonds that can be either 'C1-C3, C2-C4' or 'C1-C4, C2-C3', since these disulfide connectivities have been observed for conotoxins with cysteine framework V (for examples, see AC P0DQQ7 and AC P81755). As to expression, expressed by the venom duct.

The protein resides in the secreted. This chain is Conotoxin Pn-B01122, found in Conus pennaceus (Feathered cone).